Here is a 106-residue protein sequence, read N- to C-terminus: NADH-quinone oxidoreductase subunit K (106 aa).

A run of 3 helical transmembrane segments spans residues 10-30, 34-54, and 67-87; these read VTYILGLAGILFSIGVLGVLI, IVIIFMSVELILNSVNLVFVT, and IVFFVMAIAAAEAAVGLALVI.

It belongs to the complex I subunit 4L family. In terms of assembly, NDH-1 is composed of 14 different subunits. Subunits NuoA, H, J, K, L, M, N constitute the membrane sector of the complex.

The protein resides in the cell inner membrane. It catalyses the reaction a quinone + NADH + 5 H(+)(in) = a quinol + NAD(+) + 4 H(+)(out). Its function is as follows. NDH-1 shuttles electrons from NADH, via FMN and iron-sulfur (Fe-S) centers, to quinones in the respiratory chain. The immediate electron acceptor for the enzyme in this species is believed to be ubiquinone. Couples the redox reaction to proton translocation (for every two electrons transferred, four hydrogen ions are translocated across the cytoplasmic membrane), and thus conserves the redox energy in a proton gradient. This chain is NADH-quinone oxidoreductase subunit K, found in Leptospira biflexa serovar Patoc (strain Patoc 1 / Ames).